A 360-amino-acid chain; its full sequence is Homoserine O-acetyltransferase (360 aa).

Residues 41–344 form the AB hydrolase-1 domain; sequence NAILICHALT…DYGHDAFLVD (304 aa). The Nucleophile role is filled by S144. R213 is a substrate binding site. Catalysis depends on residues D305 and H338. D339 contacts substrate.

It belongs to the AB hydrolase superfamily. MetX family. In terms of assembly, homodimer.

The protein resides in the cytoplasm. It carries out the reaction L-homoserine + acetyl-CoA = O-acetyl-L-homoserine + CoA. The protein operates within amino-acid biosynthesis; L-methionine biosynthesis via de novo pathway; O-acetyl-L-homoserine from L-homoserine: step 1/1. In terms of biological role, transfers an acetyl group from acetyl-CoA to L-homoserine, forming acetyl-L-homoserine. This is Homoserine O-acetyltransferase from Pasteurella multocida (strain Pm70).